The primary structure comprises 662 residues: DNA ligase (662 aa).

Residues 32–36 (DAEYD), 81–82 (SL), and glutamate 112 contribute to the NAD(+) site. The active-site N6-AMP-lysine intermediate is lysine 114. NAD(+) is bound by residues arginine 135, glutamate 170, lysine 286, and lysine 310. Zn(2+) is bound by residues cysteine 402, cysteine 405, cysteine 420, and cysteine 425. The BRCT domain maps to 583–662 (PKGGPLTGST…AELHAMLRGE (80 aa)).

The protein belongs to the NAD-dependent DNA ligase family. LigA subfamily. It depends on Mg(2+) as a cofactor. Requires Mn(2+) as cofactor.

The catalysed reaction is NAD(+) + (deoxyribonucleotide)n-3'-hydroxyl + 5'-phospho-(deoxyribonucleotide)m = (deoxyribonucleotide)n+m + AMP + beta-nicotinamide D-nucleotide.. In terms of biological role, DNA ligase that catalyzes the formation of phosphodiester linkages between 5'-phosphoryl and 3'-hydroxyl groups in double-stranded DNA using NAD as a coenzyme and as the energy source for the reaction. It is essential for DNA replication and repair of damaged DNA. The polypeptide is DNA ligase (Solibacter usitatus (strain Ellin6076)).